The following is an 82-amino-acid chain: Delta-ctenitoxin-Pn2a (82 aa).

The signal sequence occupies residues 1-17 (MKVAILFLSILVLAVAS). Residues 18 to 34 (ESIEESRDDFAVEELGR) constitute a propeptide that is removed on maturation. Disulfide bonds link Cys-37-Cys-51, Cys-44-Cys-57, Cys-48-Cys-80, Cys-50-Cys-65, and Cys-59-Cys-63.

It belongs to the neurotoxin 03 (Tx2) family. 06 subfamily. Expressed by the venom gland.

It localises to the secreted. Its function is as follows. Toxin that is known to potentiate erectile function. It binds voltage-dependently to sodium channels (Nav), inhibits the inactivation of the activated channels and decreases the peak inward current. The toxin delays inactivation of Nav1.2/SCN2A, Nav1.3/SCN3A, Nav1.4/SCN4A and Nav1.8/SCN10A, slows the inactivation process and decreases the sodium peak amplitude of Nav1.5/SCN5A and Nav1.6/SCN8A. In vivo, it enhances erectile function by inducing the release of nictric oxide (NO): it slows the sodium current, leading to depolarization, which leads to an increase in calcium influx (probably via activation of N-type calcium channels) which in turn activates neuronal NO synthase (nNOS/NOS1), inducing nitric oxide (NO) production. In a final step, NO activates soluble guanylate cyclase (GUCY1A1/GUCY1B1) which in turn increases cGMP formation, resulting in penile erection. It is noteworthy that the toxin does not provoke erection by inhibiting phosphodiesterase type 5 (PDE5A), an enzyme that hydrolysis cGMP. In vivo, it also causes scratching, lacrimation, hypersalivation, sweating and agitation followed by spastic paralysis of the anterior and posterior extremities and death at dose levels of 0.79 mg/mouse. It is insecticidal to the larval and adult forms of the house fly. The toxin also improves cavernosal relaxation in different models where erectile dysfunction is observed, such as deoxycorticosterone-acetate (DOCA)-salt hypertensive rats, mice models for type-1 diabetes, as well as elderly rats. This chain is Delta-ctenitoxin-Pn2a, found in Phoneutria nigriventer (Brazilian armed spider).